We begin with the raw amino-acid sequence, 407 residues long: 4-hydroxy-3-methylbut-2-en-1-yl diphosphate synthase (flavodoxin) (407 aa).

[4Fe-4S] cluster is bound by residues Cys-296, Cys-299, Cys-342, and Glu-349.

The protein belongs to the IspG family. Requires [4Fe-4S] cluster as cofactor.

The catalysed reaction is (2E)-4-hydroxy-3-methylbut-2-enyl diphosphate + oxidized [flavodoxin] + H2O + 2 H(+) = 2-C-methyl-D-erythritol 2,4-cyclic diphosphate + reduced [flavodoxin]. Its pathway is isoprenoid biosynthesis; isopentenyl diphosphate biosynthesis via DXP pathway; isopentenyl diphosphate from 1-deoxy-D-xylulose 5-phosphate: step 5/6. Converts 2C-methyl-D-erythritol 2,4-cyclodiphosphate (ME-2,4cPP) into 1-hydroxy-2-methyl-2-(E)-butenyl 4-diphosphate. This is 4-hydroxy-3-methylbut-2-en-1-yl diphosphate synthase (flavodoxin) from Methylococcus capsulatus (strain ATCC 33009 / NCIMB 11132 / Bath).